Reading from the N-terminus, the 101-residue chain is Large ribosomal subunit protein bL28 (101 aa).

Belongs to the bacterial ribosomal protein bL28 family.

The chain is Large ribosomal subunit protein bL28 from Rhodopseudomonas palustris (strain BisB5).